The primary structure comprises 470 residues: UDP-N-acetylmuramate--L-alanine ligase (470 aa).

114 to 120 (GTHGKTT) lines the ATP pocket.

The protein belongs to the MurCDEF family.

Its subcellular location is the cytoplasm. It catalyses the reaction UDP-N-acetyl-alpha-D-muramate + L-alanine + ATP = UDP-N-acetyl-alpha-D-muramoyl-L-alanine + ADP + phosphate + H(+). Its pathway is cell wall biogenesis; peptidoglycan biosynthesis. Its function is as follows. Cell wall formation. The protein is UDP-N-acetylmuramate--L-alanine ligase of Xanthobacter autotrophicus (strain ATCC BAA-1158 / Py2).